A 42-amino-acid polypeptide reads, in one-letter code: Photosystem I reaction center subunit IX (42 aa).

A helical membrane pass occupies residues 7–27 (YLSTAPVLATLWFGFLAGLLI).

Belongs to the PsaJ family.

It localises to the plastid. The protein resides in the chloroplast thylakoid membrane. Its function is as follows. May help in the organization of the PsaE and PsaF subunits. This is Photosystem I reaction center subunit IX from Anthoceros angustus (Hornwort).